Reading from the N-terminus, the 1099-residue chain is ATP-dependent helicase/deoxyribonuclease subunit B (1099 aa).

Residues cysteine 766, cysteine 1056, cysteine 1059, and cysteine 1065 each contribute to the [4Fe-4S] cluster site.

This sequence belongs to the helicase family. AddB/RexB type 2 subfamily. As to quaternary structure, heterodimer of AddA and RexB. Requires Mg(2+) as cofactor. The cofactor is [4Fe-4S] cluster.

The heterodimer acts as both an ATP-dependent DNA helicase and an ATP-dependent, dual-direction single-stranded exonuclease. Recognizes the chi site generating a DNA molecule suitable for the initiation of homologous recombination. This subunit has 5' -&gt; 3' nuclease activity but not helicase activity. The protein is ATP-dependent helicase/deoxyribonuclease subunit B of Lactococcus lactis subsp. lactis (strain IL1403) (Streptococcus lactis).